We begin with the raw amino-acid sequence, 290 residues long: Picrinine-N-methytransferase TMT4 (290 aa).

The SAM motif I stretch occupies residues 71–80 (MLDVGCGIGG). The Vacuolar targeting signal signature appears at 133-139 (DGTFDVV). Residues 134 to 142 (GTFDVVFTI) are SAM motif II. Residues 161 to 170 (VAAPGAAIVI) form an SAM motif III region.

This sequence belongs to the class I-like SAM-binding methyltransferase superfamily. gTMT family. In terms of assembly, homodimer.

It is found in the vacuole membrane. The enzyme catalyses picrinine + S-adenosyl-L-methionine = ervincine + S-adenosyl-L-homocysteine + H(+). It functions in the pathway alkaloid biosynthesis; vindoline biosynthesis. S-adenosyl-L-methionine-dependent N-methyltransferase involved in the biosynthesis of biologically active monoterpenoid indole alkaloids (MIAs) natural products including vindoline. Catalyzes the conversion of picrinine to N-methylpicrinine (ervincine). This chain is Picrinine-N-methytransferase TMT4, found in Catharanthus roseus (Madagascar periwinkle).